A 363-amino-acid chain; its full sequence is MADVVLRNVRKTYPGGFEAIKGVDFAVGDGQFCVLVGPSGCGKSTLLRMVAGLETITAGEIEIGGRVVNDVEPADRDIAMVFQNYALYPHMTVYNNMAYGLRNRGMAKAEIDARVQEAARILELGPMLIRKPRQLSGGQRQRVAMGRAIVRHPKVFLFDEPLSNLDAKLRVAMRVEIRKLQRRLATTAIYVTHDQLEAMTLADVLVVMNGGQVEQIGSPLDVYAKPATTFVASFIGAPPMNLLTLAHDLRSQLSGAPPEAGILGVRPEDLVIGPGTAAQGGLALDITVEAIERVGPETFVYGVRAGHEARPVVAGKPGEGAGGDVIVRIPGQAAPPVGERITVVAPPHGLHLFSADGRRRIAG.

The 232-residue stretch at 4 to 235 (VVLRNVRKTY…PATTFVASFI (232 aa)) folds into the ABC transporter domain. 37–44 (GPSGCGKS) is a binding site for ATP.

The protein belongs to the ABC transporter superfamily. sn-glycerol-3-phosphate importer (TC 3.A.1.1.3) family. In terms of assembly, the complex is composed of two ATP-binding proteins (UgpC), two transmembrane proteins (UgpA and UgpE) and a solute-binding protein (UgpB).

Its subcellular location is the cell inner membrane. It carries out the reaction sn-glycerol 3-phosphate(out) + ATP + H2O = sn-glycerol 3-phosphate(in) + ADP + phosphate + H(+). In terms of biological role, part of the ABC transporter complex UgpBAEC involved in sn-glycerol-3-phosphate (G3P) import. Responsible for energy coupling to the transport system. In Rhodopseudomonas palustris (strain ATCC BAA-98 / CGA009), this protein is sn-glycerol-3-phosphate import ATP-binding protein UgpC.